The following is a 236-amino-acid chain: UPF0257 lipoprotein YnfC (236 aa).

Positions 1–16 (MKYKLLPCLLAILLTG) are cleaved as a signal peptide. C17 carries the N-palmitoyl cysteine lipid modification. C17 is lipidated: S-diacylglycerol cysteine.

The protein belongs to the UPF0257 family.

The protein localises to the cell membrane. The polypeptide is UPF0257 lipoprotein YnfC (Escherichia coli O157:H7).